The chain runs to 415 residues: Phosphoribosylamine--glycine ligase (415 aa).

One can recognise an ATP-grasp domain in the interval 108-311 (KKIMEKYNIP…LMQHIIDLDE (204 aa)). Position 134–191 (134–191 (IENCELPVVVKKDGLAAGKGVIIADTIEAARSAIEIMYGDEEEGTVVFETFLEGEEFS)) interacts with ATP. Mg(2+) is bound by residues Glu-281 and Asn-283.

This sequence belongs to the GARS family. Mg(2+) serves as cofactor. It depends on Mn(2+) as a cofactor.

It carries out the reaction 5-phospho-beta-D-ribosylamine + glycine + ATP = N(1)-(5-phospho-beta-D-ribosyl)glycinamide + ADP + phosphate + H(+). It participates in purine metabolism; IMP biosynthesis via de novo pathway; N(1)-(5-phospho-D-ribosyl)glycinamide from 5-phospho-alpha-D-ribose 1-diphosphate: step 2/2. The chain is Phosphoribosylamine--glycine ligase from Staphylococcus aureus (strain MW2).